Reading from the N-terminus, the 182-residue chain is Large ribosomal subunit protein bL17 (182 aa).

Residues 126-182 (ERANRVAASKAKKAEAEAAEAKAEEAEEAPEVEADTATDKAAEAEAAEAADEAAEDK) are disordered. Residues 137-149 (KKAEAEAAEAKAE) are compositionally biased toward basic and acidic residues. Composition is skewed to acidic residues over residues 150-161 (EAEEAPEVEADT) and 170-182 (EAAE…AEDK).

It belongs to the bacterial ribosomal protein bL17 family. In terms of assembly, part of the 50S ribosomal subunit. Contacts protein L32.

In Corynebacterium jeikeium (strain K411), this protein is Large ribosomal subunit protein bL17.